Consider the following 808-residue polypeptide: Beta-catenin/armadillo-related protein 1 (808 aa).

Residues Met1–Met85 are involved in transcriptional activation. ARM repeat units follow at residues Arg118–Lys160, Cys165–Ser209, and Ser369–Ala408. The tract at residues Asn541–Phe808 is involved in transcriptional activation. Residues Thr702–Phe808 form a disordered region. Over residues Tyr723–Asn736 the composition is skewed to polar residues. Residues Ser737–Tyr750 are compositionally biased toward low complexity. Positions Asn786 to Ser798 are enriched in polar residues.

It belongs to the beta-catenin family. Interacts with apr-1, axl-1, daf-16, lin-23, and pop-1 (via acidic region in N-terminus 1-44). Interacts (via ARM repeats) with pry-1.

It is found in the cytoplasm. The protein resides in the nucleus. It localises to the membrane. Its subcellular location is the cell junction. Functionally, participates in the Wnt signaling pathway which affects cell fate and may regulate the stem cell divisions of seam cells during larval development. Functions as a transcriptional activator but is dependent on the interaction with pop-1. Involved in maintaining lin-39 Hox expression and regulating glr-1 abundance at the synapses. Required for mab-5 expression during Q neuroblast migration and for oxidative stress-induced daf-16 signaling. Has roles in egg laying, vulva precursor cell fate determination, Q neuroblast migration, posterior ectodermal cell P12 specification, movement, body length, male tail development and dauer induction. Functionally redundant to wrm-1 and hmp-2. This is Beta-catenin/armadillo-related protein 1 (bar-1) from Caenorhabditis briggsae.